Here is a 378-residue protein sequence, read N- to C-terminus: uncharacterized protein (378 aa).

This is an uncharacterized protein from Nostoc sp. (strain PCC 7120 / SAG 25.82 / UTEX 2576).